A 370-amino-acid chain; its full sequence is Peptidoglycan glycosyltransferase MrdB (370 aa).

Helical transmembrane passes span 20 to 40 (MLLI…SASG), 50 to 70 (IGQI…PPRV), 75 to 95 (APYL…FGAI), 136 to 156 (SLKN…LVAA), 160 to 180 (LGTS…SGLS), 183 to 203 (LIGV…FFLM), 263 to 283 (FIFA…LLAL), 312 to 332 (LILF…LPVV), and 336 to 356 (LPLV…FGIV).

This sequence belongs to the SEDS family. MrdB/RodA subfamily.

The protein localises to the cell inner membrane. The catalysed reaction is [GlcNAc-(1-&gt;4)-Mur2Ac(oyl-L-Ala-gamma-D-Glu-L-Lys-D-Ala-D-Ala)](n)-di-trans,octa-cis-undecaprenyl diphosphate + beta-D-GlcNAc-(1-&gt;4)-Mur2Ac(oyl-L-Ala-gamma-D-Glu-L-Lys-D-Ala-D-Ala)-di-trans,octa-cis-undecaprenyl diphosphate = [GlcNAc-(1-&gt;4)-Mur2Ac(oyl-L-Ala-gamma-D-Glu-L-Lys-D-Ala-D-Ala)](n+1)-di-trans,octa-cis-undecaprenyl diphosphate + di-trans,octa-cis-undecaprenyl diphosphate + H(+). The protein operates within cell wall biogenesis; peptidoglycan biosynthesis. Its function is as follows. Peptidoglycan polymerase that is essential for cell wall elongation. The protein is Peptidoglycan glycosyltransferase MrdB of Escherichia coli O157:H7.